A 61-amino-acid chain; its full sequence is Small ribosomal subunit protein eS30A (61 aa).

The tract at residues 1 to 36 (MGKVHGSLARAGKVKSQTPKVEKQEKPKQPKGRAYK) is disordered.

It belongs to the eukaryotic ribosomal protein eS30 family. As to quaternary structure, component of the small ribosomal subunit (SSU). Mature yeast ribosomes consist of a small (40S) and a large (60S) subunit. The 40S small subunit contains 1 molecule of ribosomal RNA (18S rRNA) and at least 33 different proteins. The large 60S subunit contains 3 rRNA molecules (25S, 5.8S and 5S rRNA) and at least 46 different proteins.

It is found in the cytoplasm. Its subcellular location is the nucleus. In terms of biological role, component of the ribosome, a large ribonucleoprotein complex responsible for the synthesis of proteins in the cell. The small ribosomal subunit (SSU) binds messenger RNAs (mRNAs) and translates the encoded message by selecting cognate aminoacyl-transfer RNA (tRNA) molecules. The large subunit (LSU) contains the ribosomal catalytic site termed the peptidyl transferase center (PTC), which catalyzes the formation of peptide bonds, thereby polymerizing the amino acids delivered by tRNAs into a polypeptide chain. The nascent polypeptides leave the ribosome through a tunnel in the LSU and interact with protein factors that function in enzymatic processing, targeting, and the membrane insertion of nascent chains at the exit of the ribosomal tunnel. The protein is Small ribosomal subunit protein eS30A (rps3001) of Schizosaccharomyces pombe (strain 972 / ATCC 24843) (Fission yeast).